The sequence spans 394 residues: UPF0284 protein SYNW1869 (394 aa).

Belongs to the UPF0284 family.

The chain is UPF0284 protein SYNW1869 from Parasynechococcus marenigrum (strain WH8102).